Reading from the N-terminus, the 125-residue chain is Ribonuclease P protein component (125 aa).

The protein belongs to the RnpA family. Consists of a catalytic RNA component (M1 or rnpB) and a protein subunit.

It catalyses the reaction Endonucleolytic cleavage of RNA, removing 5'-extranucleotides from tRNA precursor.. In terms of biological role, RNaseP catalyzes the removal of the 5'-leader sequence from pre-tRNA to produce the mature 5'-terminus. It can also cleave other RNA substrates such as 4.5S RNA. The protein component plays an auxiliary but essential role in vivo by binding to the 5'-leader sequence and broadening the substrate specificity of the ribozyme. The polypeptide is Ribonuclease P protein component (Clostridium beijerinckii (strain ATCC 51743 / NCIMB 8052) (Clostridium acetobutylicum)).